A 79-amino-acid polypeptide reads, in one-letter code: Ferredoxin (79 aa).

2 consecutive 4Fe-4S ferredoxin-type domains span residues 2–30 (PHVICEPCIGVKDQSCVEVCPVECIYDGG) and 31–60 (DQFYIHPEECIDCGACVPACPVNAIYPEED). 2 residues coordinate [3Fe-4S] cluster: Cys-9 and Cys-17. [4Fe-4S] cluster is bound by residues Cys-21, Cys-40, Cys-43, and Cys-46. [3Fe-4S] cluster is bound at residue Cys-50.

[4Fe-4S] cluster serves as cofactor. It depends on [3Fe-4S] cluster as a cofactor.

Functionally, ferredoxins are iron-sulfur proteins that transfer electrons in a wide variety of metabolic reactions. The sequence is that of Ferredoxin from Thermus thermophilus (strain ATCC 27634 / DSM 579 / HB8).